Reading from the N-terminus, the 98-residue chain is uncharacterized protein (98 aa).

This sequence belongs to the IS150/IS1296 orfA family.

This is an uncharacterized protein from Haemophilus influenzae (strain ATCC 51907 / DSM 11121 / KW20 / Rd).